The chain runs to 188 residues: Capsid protein (188 aa).

This sequence belongs to the tymoviruses capsid protein family.

The protein localises to the virion. Its function is as follows. Self-assembles to form a T=3 icosahedral capsid composed of 180 copies of the capsid protein. The capsid encapsulates the single-stranded RNA genome. This chain is Capsid protein, found in Solanum lycopersicum (Tomato).